The primary structure comprises 286 residues: Thiazole synthase (286 aa).

Catalysis depends on K122, which acts as the Schiff-base intermediate with DXP. 1-deoxy-D-xylulose 5-phosphate is bound by residues G183, 209 to 210, and 231 to 232; these read AG and NT.

Belongs to the ThiG family. In terms of assembly, homotetramer. Forms heterodimers with either ThiH or ThiS.

It localises to the cytoplasm. The enzyme catalyses [ThiS sulfur-carrier protein]-C-terminal-Gly-aminoethanethioate + 2-iminoacetate + 1-deoxy-D-xylulose 5-phosphate = [ThiS sulfur-carrier protein]-C-terminal Gly-Gly + 2-[(2R,5Z)-2-carboxy-4-methylthiazol-5(2H)-ylidene]ethyl phosphate + 2 H2O + H(+). Its pathway is cofactor biosynthesis; thiamine diphosphate biosynthesis. Functionally, catalyzes the rearrangement of 1-deoxy-D-xylulose 5-phosphate (DXP) to produce the thiazole phosphate moiety of thiamine. Sulfur is provided by the thiocarboxylate moiety of the carrier protein ThiS. In vitro, sulfur can be provided by H(2)S. The polypeptide is Thiazole synthase (Synechococcus elongatus (strain ATCC 33912 / PCC 7942 / FACHB-805) (Anacystis nidulans R2)).